The primary structure comprises 75 residues: Acyl carrier protein (75 aa).

The Carrier domain occupies 1 to 74; the sequence is MLDKVKEIIV…DVINYIEANK (74 aa). An O-(pantetheine 4'-phosphoryl)serine modification is found at Ser-34.

This sequence belongs to the acyl carrier protein (ACP) family. In terms of processing, 4'-phosphopantetheine is transferred from CoA to a specific serine of apo-ACP by AcpS. This modification is essential for activity because fatty acids are bound in thioester linkage to the sulfhydryl of the prosthetic group.

It localises to the cytoplasm. It functions in the pathway lipid metabolism; fatty acid biosynthesis. In terms of biological role, carrier of the growing fatty acid chain in fatty acid biosynthesis. The polypeptide is Acyl carrier protein (Fusobacterium nucleatum subsp. nucleatum (strain ATCC 25586 / DSM 15643 / BCRC 10681 / CIP 101130 / JCM 8532 / KCTC 2640 / LMG 13131 / VPI 4355)).